Reading from the N-terminus, the 481-residue chain is Glycogen synthase (481 aa).

Lysine 15 provides a ligand contact to ADP-alpha-D-glucose.

The protein belongs to the glycosyltransferase 1 family. Bacterial/plant glycogen synthase subfamily.

The catalysed reaction is [(1-&gt;4)-alpha-D-glucosyl](n) + ADP-alpha-D-glucose = [(1-&gt;4)-alpha-D-glucosyl](n+1) + ADP + H(+). The protein operates within glycan biosynthesis; glycogen biosynthesis. Functionally, synthesizes alpha-1,4-glucan chains using ADP-glucose. In Thermosipho melanesiensis (strain DSM 12029 / CIP 104789 / BI429), this protein is Glycogen synthase.